The sequence spans 150 residues: Large ribosomal subunit protein bL9 (150 aa).

This sequence belongs to the bacterial ribosomal protein bL9 family.

Its function is as follows. Binds to the 23S rRNA. The polypeptide is Large ribosomal subunit protein bL9 (Paraburkholderia phytofirmans (strain DSM 17436 / LMG 22146 / PsJN) (Burkholderia phytofirmans)).